A 338-amino-acid chain; its full sequence is Starch-binding domain-containing protein 1 (338 aa).

The Extracellular portion of the chain corresponds to 1–6 (MGAVWS). A helical transmembrane segment spans residues 7–23 (ALLVGGGLAGALILWLL). The Cytoplasmic segment spans residues 24 to 338 (RGDSGAPGKD…KVVHGWWGIH (315 aa)). Disordered regions lie at residues 30–73 (PGKD…RELV) and 120–148 (KIPD…WRLP). The segment covering 36–52 (AEPPQKGAPPGEAAAPG) has biased composition (low complexity). Residues 53 to 62 (DGPGGGGSGG) are compositionally biased toward gly residues. At Ser68 the chain carries Phosphoserine. Residues 122–132 (PDTHSRADSEA) are compositionally biased toward basic and acidic residues. Phosphoserine is present on residues Ser140, Ser167, and Ser179. The LIR motif lies at 185-191 (HEDWEVV). Residues Ser195, Ser196, Ser205, Ser209, Ser212, Ser220, and Ser223 each carry the phosphoserine modification. In terms of domain architecture, CBM20 spans 238 to 337 (SLKPQQVSIQ…DKVVHGWWGI (100 aa)).

Interacts with the ATG8 family proteins GABARAP and GABARAPL1. Interacts with several glycogen-associated proteins, such as GYS2 (liver glycogen synthase), GDE (glycogen debranching enzyme), GBE1 (glycogen branching enzyme 1) and EPM2A (Laforin). Post-translationally, ubiquitinated, which leads to proteasomal degradation. As to expression, expressed at high level in glycogen-accumulating organs such as muscle and liver. Trace signals are also found in brain, kidney, and pancreas.

It localises to the preautophagosomal structure membrane. Its subcellular location is the endoplasmic reticulum membrane. The protein localises to the cell membrane. The protein resides in the sarcolemma. It is found in the T-tubule. In terms of biological role, acts as a cargo receptor for glycogen. Delivers its cargo to an autophagic pathway called glycophagy, resulting in the transport of glycogen to lysosomes. This is Starch-binding domain-containing protein 1 from Mus musculus (Mouse).